The primary structure comprises 338 residues: Methionine synthase (338 aa).

Zn(2+)-binding residues include His-210, Cys-212, Glu-234, and Cys-294.

The protein belongs to the archaeal MetE family. It depends on Zn(2+) as a cofactor.

Its pathway is amino-acid biosynthesis; L-methionine biosynthesis via de novo pathway. Functionally, catalyzes the transfer of a methyl group to L-homocysteine resulting in methionine formation. The physiological methyl donor is unknown. The protein is Methionine synthase of Pyrococcus abyssi (strain GE5 / Orsay).